Consider the following 447-residue polypeptide: MGAIQAIRGTRDILPPETNYWQWVEAIAKSILDRALYQEIRTPIFEQTSLFERGIGEATDVVGKEMYSFTDRGDRPITLRPEGTAGVVRAYIEQNLQAAGGVQRLWYTGPMFRYERPQAGRQRQFHQLGVEVLGSADPRADVEVIALGTDILKALGLSNLSLALNSVGNGGDRQRYREALIAYLTPFKAELDPDSQDRLERNPLRILDSKAKRTQEIVQDAPSILDHLGVDSQRHFDQVQQLLTNLGIAYQLTPTLVRGLDYYTHTAFEIQSSDLGAQATVCGGGRYDGLVAELGGPVTPAVGWAMGLERLIILLQQMATPPAPSPDLYLISKGEKAEPQALILAQKLRNQGLAVALDLSASAFGKQFKRADKSGAIACLVLGDGEIATGTVQLKWLADKAQETLQLQDLMGNITELKQRLAGHREKYPHLTSNFSVTCHDPMDNLV.

This sequence belongs to the class-II aminoacyl-tRNA synthetase family. In terms of assembly, homodimer.

Its subcellular location is the cytoplasm. It catalyses the reaction tRNA(His) + L-histidine + ATP = L-histidyl-tRNA(His) + AMP + diphosphate + H(+). The polypeptide is Histidine--tRNA ligase (hisS) (Synechocystis sp. (strain ATCC 27184 / PCC 6803 / Kazusa)).